Here is a 187-residue protein sequence, read N- to C-terminus: Elongation factor P (187 aa).

Belongs to the elongation factor P family.

The protein localises to the cytoplasm. It participates in protein biosynthesis; polypeptide chain elongation. Involved in peptide bond synthesis. Stimulates efficient translation and peptide-bond synthesis on native or reconstituted 70S ribosomes in vitro. Probably functions indirectly by altering the affinity of the ribosome for aminoacyl-tRNA, thus increasing their reactivity as acceptors for peptidyl transferase. The sequence is that of Elongation factor P from Mycobacterium leprae (strain Br4923).